A 201-amino-acid polypeptide reads, in one-letter code: UPF0177 protein YajF (201 aa).

5 helical membrane-spanning segments follow: residues 10–30 (TVILALFLLFLSQVPLYYVEY), 44–64 (ITVNFILIGLLIILIAIMLGI), 82–102 (ILILILIIPSVALDILFSQFI), 119–139 (VMGSLLWFGKILGVALLAPIL), and 159–179 (FVFSSLLFTFMHSGYSWVFLI).

Belongs to the UPF0177 family.

Its subcellular location is the cell membrane. This is UPF0177 protein YajF (yajF) from Lactococcus lactis subsp. lactis (strain IL1403) (Streptococcus lactis).